The primary structure comprises 542 residues: CTP synthase (542 aa).

The amidoligase domain stretch occupies residues 1 to 265 (MTRYIFVTGG…DDIVVERFGL (265 aa)). S13 lines the CTP pocket. A UTP-binding site is contributed by S13. Residues 14-19 (SLGKGI) and D71 each bind ATP. Positions 71 and 139 each coordinate Mg(2+). CTP contacts are provided by residues 146 to 148 (DIE), 186 to 191 (KTKPTQ), and K222. UTP is bound by residues 186-191 (KTKPTQ) and K222. The Glutamine amidotransferase type-1 domain maps to 290–541 (TIAMVGKYME…VNAALKYSGK (252 aa)). L-glutamine is bound at residue G351. C378 functions as the Nucleophile; for glutamine hydrolysis in the catalytic mechanism. L-glutamine is bound by residues 379-382 (LGMQ), E402, and R469. Catalysis depends on residues H514 and E516.

The protein belongs to the CTP synthase family. Homotetramer.

The enzyme catalyses UTP + L-glutamine + ATP + H2O = CTP + L-glutamate + ADP + phosphate + 2 H(+). It catalyses the reaction L-glutamine + H2O = L-glutamate + NH4(+). The catalysed reaction is UTP + NH4(+) + ATP = CTP + ADP + phosphate + 2 H(+). The protein operates within pyrimidine metabolism; CTP biosynthesis via de novo pathway; CTP from UDP: step 2/2. Its activity is regulated as follows. Allosterically activated by GTP, when glutamine is the substrate; GTP has no effect on the reaction when ammonia is the substrate. The allosteric effector GTP functions by stabilizing the protein conformation that binds the tetrahedral intermediate(s) formed during glutamine hydrolysis. Inhibited by the product CTP, via allosteric rather than competitive inhibition. Functionally, catalyzes the ATP-dependent amination of UTP to CTP with either L-glutamine or ammonia as the source of nitrogen. Regulates intracellular CTP levels through interactions with the four ribonucleotide triphosphates. The protein is CTP synthase of Pseudomonas aeruginosa (strain LESB58).